Consider the following 154-residue polypeptide: Large ribosomal subunit protein uL30 (154 aa).

It belongs to the universal ribosomal protein uL30 family. As to quaternary structure, part of the 50S ribosomal subunit.

This chain is Large ribosomal subunit protein uL30, found in Methanococcus maripaludis (strain C5 / ATCC BAA-1333).